Consider the following 257-residue polypeptide: Diphthine synthase (257 aa).

S-adenosyl-L-methionine-binding positions include leucine 9, aspartate 85, valine 88, 113–114 (SI), leucine 164, alanine 207, and histidine 232.

It belongs to the diphthine synthase family. In terms of assembly, homodimer.

The enzyme catalyses 2-[(3S)-amino-3-carboxypropyl]-L-histidyl-[translation elongation factor 2] + 3 S-adenosyl-L-methionine = diphthine-[translation elongation factor 2] + 3 S-adenosyl-L-homocysteine + 3 H(+). It participates in protein modification; peptidyl-diphthamide biosynthesis. S-adenosyl-L-methionine-dependent methyltransferase that catalyzes the trimethylation of the amino group of the modified target histidine residue in translation elongation factor 2 (EF-2), to form an intermediate called diphthine. The three successive methylation reactions represent the second step of diphthamide biosynthesis. The chain is Diphthine synthase from Methanococcus aeolicus (strain ATCC BAA-1280 / DSM 17508 / OCM 812 / Nankai-3).